Reading from the N-terminus, the 158-residue chain is Glutathione peroxidase homolog BsaA (158 aa).

C36 is an active-site residue.

It belongs to the glutathione peroxidase family.

The protein is Glutathione peroxidase homolog BsaA (bsaA) of Staphylococcus aureus (strain COL).